The primary structure comprises 374 residues: ATPase ASNA1 homolog (374 aa).

44–51 (KGGVGKTT) is an ATP binding site. Asp73 is a catalytic residue. The ATP site is built by Glu244 and Asn271.

This sequence belongs to the arsA ATPase family. As to quaternary structure, homodimer.

The protein localises to the cytoplasm. Its subcellular location is the endoplasmic reticulum. Functionally, ATPase required for the post-translational delivery of tail-anchored (TA) proteins to the endoplasmic reticulum. Recognizes and selectively binds the transmembrane domain of TA proteins in the cytosol. This complex then targets to the endoplasmic reticulum by membrane-bound receptors, where the tail-anchored protein is released for insertion. This process is regulated by ATP binding and hydrolysis. ATP binding drives the homodimer towards the closed dimer state, facilitating recognition of newly synthesized TA membrane proteins. ATP hydrolysis is required for insertion. Subsequently, the homodimer reverts towards the open dimer state, lowering its affinity for the membrane-bound receptor, and returning it to the cytosol to initiate a new round of targeting. The sequence is that of ATPase ASNA1 homolog from Plasmodium vivax (strain Salvador I).